We begin with the raw amino-acid sequence, 272 residues long: Isoprenyl transferase (272 aa).

D32 is an active-site residue. Mg(2+) is bound at residue D32. Substrate contacts are provided by residues 33–36 (GNGR), W37, R45, H49, and 77–79 (STE). N80 (proton acceptor) is an active-site residue. Residues W81, R83, R200, and 206 to 208 (RIS) each bind substrate. E219 is a Mg(2+) binding site.

This sequence belongs to the UPP synthase family. Homodimer. Requires Mg(2+) as cofactor.

Functionally, catalyzes the condensation of isopentenyl diphosphate (IPP) with allylic pyrophosphates generating different type of terpenoids. This is Isoprenyl transferase from Prochlorococcus marinus subsp. pastoris (strain CCMP1986 / NIES-2087 / MED4).